The sequence spans 418 residues: MRALLLISTICLLARALAAEVKKPAAAAAPGTAEKLSPKAATLAERSAGLAFSLYQAMAKDQAVENILLSPVVVASSLGLVSLGGKAATASQAKAVLSAEQLRDDEVHAGLGELLRSLSNSTARNVTWKLGSRLYGPSSVSFAEDFVRSSKQHYNCEHSKINFRDKRSALQSINEWAAQTTDGKLPEVTKDVERTDGALLVNAMFFKPHWDERFHHKMVDNRGFMVTRSYTVGVTMMHRTGLYNYYDDEKEKLQMVEMPLAHKLSSLIIIMPHHVEPLERLEKLLTKEQLKVWMGKMQKKAVAISLPKGVVEVTHDLQKHLAGLGLTEAIDKNKADLSRMSGKKDLYLASVFHATAFEWDTDGNPFDQDIYGREELRSPKLFYADHPFIFLVRDTQSGSLLFIGRLVRPKGDKMRDEL.

An N-terminal signal peptide occupies residues M1–A18. K94 is subject to N6-succinyllysine. N-linked (GlcNAc...) asparagine glycosylation is found at N120 and N125. The residue at position 141 (S141) is a Phosphoserine. Residue K207 is modified to N6-acetyllysine. K296 bears the N6-succinyllysine mark. At K319 the chain carries N6-acetyllysine. A Prevents secretion from ER motif is present at residues R415–L418.

It belongs to the serpin family.

The protein localises to the endoplasmic reticulum lumen. In terms of biological role, binds specifically to collagen. Could be involved as a chaperone in the biosynthetic pathway of collagen. This is Serpin H1 (SERPINH1) from Bos taurus (Bovine).